We begin with the raw amino-acid sequence, 527 residues long: Bifunctional purine biosynthesis protein PurH (527 aa).

The MGS-like domain maps to 1–149 (MASDFLPVRR…KNFARVAVAT (149 aa)).

The protein belongs to the PurH family.

It catalyses the reaction (6R)-10-formyltetrahydrofolate + 5-amino-1-(5-phospho-beta-D-ribosyl)imidazole-4-carboxamide = 5-formamido-1-(5-phospho-D-ribosyl)imidazole-4-carboxamide + (6S)-5,6,7,8-tetrahydrofolate. It carries out the reaction IMP + H2O = 5-formamido-1-(5-phospho-D-ribosyl)imidazole-4-carboxamide. It functions in the pathway purine metabolism; IMP biosynthesis via de novo pathway; 5-formamido-1-(5-phospho-D-ribosyl)imidazole-4-carboxamide from 5-amino-1-(5-phospho-D-ribosyl)imidazole-4-carboxamide (10-formyl THF route): step 1/1. It participates in purine metabolism; IMP biosynthesis via de novo pathway; IMP from 5-formamido-1-(5-phospho-D-ribosyl)imidazole-4-carboxamide: step 1/1. This chain is Bifunctional purine biosynthesis protein PurH, found in Xanthomonas euvesicatoria pv. vesicatoria (strain 85-10) (Xanthomonas campestris pv. vesicatoria).